Reading from the N-terminus, the 167-residue chain is Ion-translocating oxidoreductase complex subunit B (167 aa).

Residues 1–22 (MITLIIFSFLSFLLGIILSFTA) are hydrophobic. The 4Fe-4S domain maps to 28–87 (QEDPIVEIVNELLPQSQCAQCGYSGCYPYAKAIVENSEKINKCIPGGTDLISAISSVLSI). Residues Cys45, Cys48, Cys53, Cys70, Cys113, Cys116, Cys119, Cys123, Cys143, Cys146, Cys149, and Cys153 each coordinate [4Fe-4S] cluster. 2 4Fe-4S ferredoxin-type domains span residues 104–133 (NTVLINESNCVGCSKCASFCPVDAIVGAPN) and 134–163 (FIHTVLQEFCTGCNICLLHCPTNCIEIKKE).

This sequence belongs to the 4Fe4S bacterial-type ferredoxin family. RnfB subfamily. As to quaternary structure, the complex is composed of six subunits: RnfA, RnfB, RnfC, RnfD, RnfE and RnfG. It depends on [4Fe-4S] cluster as a cofactor.

The protein resides in the cell inner membrane. Functionally, part of a membrane-bound complex that couples electron transfer with translocation of ions across the membrane. This chain is Ion-translocating oxidoreductase complex subunit B, found in Buchnera aphidicola subsp. Acyrthosiphon pisum (strain Tuc7).